Here is a 282-residue protein sequence, read N- to C-terminus: ATP synthase subunit a (282 aa).

Transmembrane regions (helical) follow at residues 45 to 65 (AIHV…LWLF), 106 to 126 (IAPL…MDLI), 160 to 179 (INAT…FYSI), 232 to 252 (LIFI…SVPW), and 253 to 273 (AIFH…LTIV).

Belongs to the ATPase A chain family. F-type ATPases have 2 components, CF(1) - the catalytic core - and CF(0) - the membrane proton channel. CF(1) has five subunits: alpha(3), beta(3), gamma(1), delta(1), epsilon(1). CF(0) has three main subunits: a(1), b(2) and c(9-12). The alpha and beta chains form an alternating ring which encloses part of the gamma chain. CF(1) is attached to CF(0) by a central stalk formed by the gamma and epsilon chains, while a peripheral stalk is formed by the delta and b chains.

It localises to the cell inner membrane. Key component of the proton channel; it plays a direct role in the translocation of protons across the membrane. This Marinomonas sp. (strain MWYL1) protein is ATP synthase subunit a.